We begin with the raw amino-acid sequence, 435 residues long: Alpha-ketoglutarate permease (435 aa).

The Cytoplasmic segment spans residues 1–13 (MNTVHAKGNVLNK). Residues 14 to 34 (IGIPSHMVWGYIGVVIFMVGD) traverse the membrane as a helical segment. Residues 35-56 (GLEQGWLSPFLVDHGLSMQQSA) are Extracellular-facing. Residues 57 to 77 (SLFTMYGIAVTISAWLSGTFV) traverse the membrane as a helical segment. The Cytoplasmic portion of the chain corresponds to 78–85 (QTWGPRKT). Residues 86 to 106 (MTVGLLAFILGSAAFIGWAIP) traverse the membrane as a helical segment. Residues 107 to 112 (HMYYPA) lie on the Extracellular side of the membrane. Residues 113–133 (LLGSYALRGLGYPLFAYSFLV) traverse the membrane as a helical segment. Topologically, residues 134-142 (WVSYSTSQN) are cytoplasmic. Residues 143 to 163 (ILGKAVGWFWFMFTCGLNVLG) traverse the membrane as a helical segment. Residues 164 to 176 (PFYSSYAVPAFGE) lie on the Extracellular side of the membrane. The chain crosses the membrane as a helical span at residues 177-197 (INTLWSALLFVAAGGILALFF). The Cytoplasmic portion of the chain corresponds to 198–228 (NKDKFTPIQKQDQPKWKELSKAFTIMFENPK). Residues 229–249 (VGIGGVVKTINAIGQFGFAIF) form a helical membrane-spanning segment. Residues 250–264 (LPTYLARYGYSVSEW) are Extracellular-facing. The chain crosses the membrane as a helical span at residues 265–285 (LQIWGTLFFVNIVFNIIFGAV). Topologically, residues 286 to 293 (GDKLGWRN) are cytoplasmic. A helical membrane pass occupies residues 294–314 (TVMWFGGVGCGIFTLALYYTP). The Extracellular segment spans residues 315 to 320 (QLIGHQ). Residues 321 to 341 (YWVLMIIACCYGAALAGYVPL) traverse the membrane as a helical segment. Topologically, residues 342 to 354 (SALLPTLAPDNKG) are cytoplasmic. Residues 355–375 (AAMSVLNLGSGLCAFIAPGIV) traverse the membrane as a helical segment. Position 376 (Ser-376) is a topological domain, extracellular. The chain crosses the membrane as a helical span at residues 377–397 (LFIGPLGAGGVIWIFAALYFF). Over 398-435 (SAFLTRFLTISEQSTDVYTEERFVRENVQTNFDKTVKQ) the chain is Cytoplasmic.

This sequence belongs to the major facilitator superfamily. Sugar transporter (TC 2.A.1.1) family. CsbX subfamily.

The protein resides in the cell membrane. The polypeptide is Alpha-ketoglutarate permease (csbX) (Bacillus subtilis (strain 168)).